Consider the following 367-residue polypeptide: Flagellar P-ring protein (367 aa).

Residues 1 to 21 (MKIIQTFFIITLLWLSQGVQA) form the signal peptide.

It belongs to the FlgI family. In terms of assembly, the basal body constitutes a major portion of the flagellar organelle and consists of four rings (L,P,S, and M) mounted on a central rod.

It is found in the periplasm. The protein resides in the bacterial flagellum basal body. Its function is as follows. Assembles around the rod to form the L-ring and probably protects the motor/basal body from shearing forces during rotation. In Nitrosococcus oceani (strain ATCC 19707 / BCRC 17464 / JCM 30415 / NCIMB 11848 / C-107), this protein is Flagellar P-ring protein.